Here is a 64-residue protein sequence, read N- to C-terminus: Large ribosomal subunit protein bL35 (64 aa).

Belongs to the bacterial ribosomal protein bL35 family.

This Colwellia psychrerythraea (strain 34H / ATCC BAA-681) (Vibrio psychroerythus) protein is Large ribosomal subunit protein bL35.